A 746-amino-acid chain; its full sequence is Eukaryotic translation initiation factor 3 subunit B (746 aa).

Basic and acidic residues predominate over residues 1–11 (MAPSYEHLREA). The segment at 1–20 (MAPSYEHLREADLDEDEFDE) is disordered. The 87-residue stretch at 42 to 128 (TFVVIDGLPE…HTLRVNKLMD (87 aa)) folds into the RRM domain. WD repeat units follow at residues 195–234 (DRPN…RLGR), 247–294 (PQEN…RSFA), 307–346 (PRKH…LLDK), 349–386 (IKVE…IGSN), 458–500 (TIKD…FFCP), 517–560 (LDKR…EKPE), and 575–620 (ADHY…LREE).

Belongs to the eIF-3 subunit B family. As to quaternary structure, component of the eukaryotic translation initiation factor 3 (eIF-3) complex.

Its subcellular location is the cytoplasm. In terms of biological role, RNA-binding component of the eukaryotic translation initiation factor 3 (eIF-3) complex, which is involved in protein synthesis of a specialized repertoire of mRNAs and, together with other initiation factors, stimulates binding of mRNA and methionyl-tRNAi to the 40S ribosome. The eIF-3 complex specifically targets and initiates translation of a subset of mRNAs involved in cell proliferation. The protein is Eukaryotic translation initiation factor 3 subunit B of Pyricularia oryzae (strain 70-15 / ATCC MYA-4617 / FGSC 8958) (Rice blast fungus).